Reading from the N-terminus, the 246-residue chain is Exosome complex component Rrp41 (246 aa).

The protein belongs to the RNase PH family. Rrp41 subfamily. As to quaternary structure, component of the archaeal exosome complex. Forms a hexameric ring-like arrangement composed of 3 Rrp41-Rrp42 heterodimers. The hexameric ring associates with a trimer of Rrp4 and/or Csl4 subunits.

It localises to the cytoplasm. In terms of biological role, catalytic component of the exosome, which is a complex involved in RNA degradation. Has 3'-&gt;5' exoribonuclease activity. Can also synthesize heteromeric RNA-tails. This is Exosome complex component Rrp41 from Pyrobaculum calidifontis (strain DSM 21063 / JCM 11548 / VA1).